Here is a 177-residue protein sequence, read N- to C-terminus: MENMGTRVIEPLIMGRVVGDVLDFFTPTTKMNVSYNKKQVSNGHELFPSSVSSKPRVEIHGGDLRSFFTLVMIDPDVPGPSDPFLKEHLHWIVTNIPGTTDATFGKEVVSYELPRPSIGIHRFVFVLFRQKQRRVIFPNIPSRDHFNTRKFAVEYDLGLPVAAVFFNAQRETAARKR.

The protein belongs to the phosphatidylethanolamine-binding protein family. Expressed below the apical dome of inflorescence and coflorescence meristems, and in inflorescence stem.

It is found in the cytoplasm. Controls inflorescence meristem identity and is required for maintenance of an indeterminate inflorescence. Prevents the expression of 'APETALA1' and 'LEAFY'. Also plays a role in the regulation of the time of flowering in the long-day flowering pathway. May form complexes with phosphorylated ligands by interfering with kinases and their effectors. The chain is Protein TERMINAL FLOWER 1 (TFL1) from Arabidopsis thaliana (Mouse-ear cress).